Reading from the N-terminus, the 681-residue chain is DNA-directed RNA polymerase subunit beta' (681 aa).

Zn(2+) contacts are provided by Cys-69, Cys-71, Cys-87, and Cys-90. Residues Asp-489, Asp-491, and Asp-493 each coordinate Mg(2+).

This sequence belongs to the RNA polymerase beta' chain family. RpoC1 subfamily. As to quaternary structure, in plastids the minimal PEP RNA polymerase catalytic core is composed of four subunits: alpha, beta, beta', and beta''. When a (nuclear-encoded) sigma factor is associated with the core the holoenzyme is formed, which can initiate transcription. Requires Mg(2+) as cofactor. The cofactor is Zn(2+).

It is found in the plastid. Its subcellular location is the chloroplast. The enzyme catalyses RNA(n) + a ribonucleoside 5'-triphosphate = RNA(n+1) + diphosphate. In terms of biological role, DNA-dependent RNA polymerase catalyzes the transcription of DNA into RNA using the four ribonucleoside triphosphates as substrates. In Nicotiana tomentosiformis (Tobacco), this protein is DNA-directed RNA polymerase subunit beta'.